Here is a 420-residue protein sequence, read N- to C-terminus: Cell division protein FtsA (420 aa).

The protein belongs to the FtsA/MreB family. In terms of assembly, self-interacts. Interacts with FtsZ.

The protein localises to the cell inner membrane. Functionally, cell division protein that is involved in the assembly of the Z ring. May serve as a membrane anchor for the Z ring. This Escherichia coli O157:H7 protein is Cell division protein FtsA.